We begin with the raw amino-acid sequence, 390 residues long: GTPase Obg (390 aa).

In terms of domain architecture, Obg spans 1–159 (MKFVDEASIL…RELLLELMLL (159 aa)). Residues 127–147 (NTRFKSSVNRTPRQKTNGTPG) form a disordered region. Residues 129–145 (RFKSSVNRTPRQKTNGT) are compositionally biased toward polar residues. The region spanning 160–333 (ADVGMLGMPN…LCWDVMTFIL (174 aa)) is the OBG-type G domain. GTP is bound by residues 166–173 (GMPNAGKS), 191–195 (FTTLV), 213–216 (DIPG), 283–286 (NKID), and 314–316 (SAA). S173 and T193 together coordinate Mg(2+).

This sequence belongs to the TRAFAC class OBG-HflX-like GTPase superfamily. OBG GTPase family. Monomer. Requires Mg(2+) as cofactor.

It localises to the cytoplasm. Its function is as follows. An essential GTPase which binds GTP, GDP and possibly (p)ppGpp with moderate affinity, with high nucleotide exchange rates and a fairly low GTP hydrolysis rate. Plays a role in control of the cell cycle, stress response, ribosome biogenesis and in those bacteria that undergo differentiation, in morphogenesis control. This is GTPase Obg from Shigella sonnei (strain Ss046).